Here is a 348-residue protein sequence, read N- to C-terminus: GTP 3',8-cyclase (348 aa).

The Radical SAM core domain occupies 24–248 (PFGRAVTYLR…TDIDYQTGGP (225 aa)). Position 33 (Arg33) interacts with GTP. [4Fe-4S] cluster-binding residues include Cys40 and Cys44. Tyr46 lines the S-adenosyl-L-methionine pocket. Residue Cys47 coordinates [4Fe-4S] cluster. Arg82 is a binding site for GTP. Residue Gly86 coordinates S-adenosyl-L-methionine. Residue Thr115 coordinates GTP. Ser139 provides a ligand contact to S-adenosyl-L-methionine. Lys175 serves as a coordination point for GTP. Met209 contributes to the S-adenosyl-L-methionine binding site. [4Fe-4S] cluster-binding residues include Cys272 and Cys275. 277–279 (RVR) contributes to the GTP binding site. Residue Cys289 coordinates [4Fe-4S] cluster.

It belongs to the radical SAM superfamily. MoaA family. In terms of assembly, monomer and homodimer. [4Fe-4S] cluster is required as a cofactor.

It carries out the reaction GTP + AH2 + S-adenosyl-L-methionine = (8S)-3',8-cyclo-7,8-dihydroguanosine 5'-triphosphate + 5'-deoxyadenosine + L-methionine + A + H(+). The protein operates within cofactor biosynthesis; molybdopterin biosynthesis. Its function is as follows. Catalyzes the cyclization of GTP to (8S)-3',8-cyclo-7,8-dihydroguanosine 5'-triphosphate. The polypeptide is GTP 3',8-cyclase (Rhizobium etli (strain ATCC 51251 / DSM 11541 / JCM 21823 / NBRC 15573 / CFN 42)).